Consider the following 443-residue polypeptide: Regulator of rDNA transcription protein 5 (443 aa).

The region spanning 4 to 87 (SRIYIANVSY…RVLRVRTHNP (84 aa)) is the RRM 1 domain. Residues 112–140 (EDTAASGERAPTDAQDHPDQPQEGHMSPD) are disordered. A compositionally biased stretch (basic and acidic residues) spans 121–133 (APTDAQDHPDQPQ). The 86-residue stretch at 183 to 268 (DTVYCAFLPK…TKISIKPAYI (86 aa)) folds into the RRM 2 domain. Residues 408–443 (GMTKQSVGSNKKKNKKKKSARGKEVRKLSVSNTTTQ) form a disordered region. Residues 417–427 (NKKKNKKKKSA) show a composition bias toward basic residues.

The protein belongs to the RRT5 family.

May be involved in the modulation of rDNA transcription. The polypeptide is Regulator of rDNA transcription protein 5 (RRT5) (Candida glabrata (strain ATCC 2001 / BCRC 20586 / JCM 3761 / NBRC 0622 / NRRL Y-65 / CBS 138) (Yeast)).